The following is a 158-amino-acid chain: NKG2-F type II integral membrane protein (158 aa).

The span at 1 to 12 (MNKQRGTYSEVS) shows a compositional bias: polar residues. The disordered stretch occupies residues 1-30 (MNKQRGTYSEVSLAQDPKRQQRKLKGNKSS). Residues 1 to 74 (MNKQRGTYSE…LPPPERLTAE (74 aa)) lie on the Cytoplasmic side of the membrane. The chain crosses the membrane as a helical span at residues 75–95 (VLGIICIVLMATVLKTIVLIP). The Extracellular segment spans residues 96–158 (CIGVLEQNNF…VLQRTLICFL (63 aa)).

Can form disulfide-bonded heterodimer with CD94. Natural killer cells.

The protein resides in the membrane. In terms of biological role, may play a role as a receptor for the recognition of MHC class I HLA-E molecules by NK cells. In Pan troglodytes (Chimpanzee), this protein is NKG2-F type II integral membrane protein (KLRC4).